A 566-amino-acid chain; its full sequence is Proline--tRNA ligase (566 aa).

The protein belongs to the class-II aminoacyl-tRNA synthetase family. ProS type 1 subfamily. In terms of assembly, homodimer.

The protein localises to the cytoplasm. The catalysed reaction is tRNA(Pro) + L-proline + ATP = L-prolyl-tRNA(Pro) + AMP + diphosphate. Its function is as follows. Catalyzes the attachment of proline to tRNA(Pro) in a two-step reaction: proline is first activated by ATP to form Pro-AMP and then transferred to the acceptor end of tRNA(Pro). As ProRS can inadvertently accommodate and process non-cognate amino acids such as alanine and cysteine, to avoid such errors it has two additional distinct editing activities against alanine. One activity is designated as 'pretransfer' editing and involves the tRNA(Pro)-independent hydrolysis of activated Ala-AMP. The other activity is designated 'posttransfer' editing and involves deacylation of mischarged Ala-tRNA(Pro). The misacylated Cys-tRNA(Pro) is not edited by ProRS. The chain is Proline--tRNA ligase from Bacillus cereus (strain B4264).